Consider the following 99-residue polypeptide: Class II hydrophobin 1 (99 aa).

The signal sequence occupies residues 1 to 26 (MKFIAVVAALTASLAMAAPTESSTDT). Cystine bridges form between C31/C80, C41/C71, C42/C54, and C81/C92.

It belongs to the cerato-ulmin hydrophobin family. In terms of assembly, homotetramer. Further self-assembles to form highly ordered films at water-air interfaces through intermolecular interactions.

It localises to the secreted. The protein resides in the cell wall. In terms of biological role, aerial growth, conidiation, and dispersal of filamentous fungi in the environment rely upon a capability of their secreting small amphipathic proteins called hydrophobins (HPBs) with low sequence identity. Class I can self-assemble into an outermost layer of rodlet bundles on aerial cell surfaces, conferring cellular hydrophobicity that supports fungal growth, development and dispersal; whereas Class II form highly ordered films at water-air interfaces through intermolecular interactions but contribute nothing to the rodlet structure. HFB1 is a class II hydrophobin that shows antifungal activity against pathogenic and opportunistic fungi such as Cryptococcus neoformans, Nakaseomyces glabrataa, or Candida tropicalis. In Sodiomyces alkalinus (strain CBS 110278 / VKM F-3762 / F11) (Alkaliphilic filamentous fungus), this protein is Class II hydrophobin 1.